We begin with the raw amino-acid sequence, 117 residues long: MAVYVKFDVPQEMEEKTAEVLSKSEKVKKGANEVTKAVERGTAKLVVLAKDVQPEEIVAHIPIICEEKGIPYTYIATKEDLGKAIGLEVSTAAVAIIAEKDANALKDLVEKINGLKA.

The protein belongs to the eukaryotic ribosomal protein eL8 family. Part of the 50S ribosomal subunit. Probably part of the RNase P complex.

It localises to the cytoplasm. In terms of biological role, multifunctional RNA-binding protein that recognizes the K-turn motif in ribosomal RNA, the RNA component of RNase P, box H/ACA, box C/D and box C'/D' sRNAs. The sequence is that of Large ribosomal subunit protein eL8 from Methanococcus aeolicus (strain ATCC BAA-1280 / DSM 17508 / OCM 812 / Nankai-3).